Consider the following 144-residue polypeptide: Large ribosomal subunit protein uL11 (144 aa).

Belongs to the universal ribosomal protein uL11 family. Part of the ribosomal stalk of the 50S ribosomal subunit. Interacts with L10 and the large rRNA to form the base of the stalk. L10 forms an elongated spine to which L12 dimers bind in a sequential fashion forming a multimeric L10(L12)X complex. In terms of processing, one or more lysine residues are methylated.

In terms of biological role, forms part of the ribosomal stalk which helps the ribosome interact with GTP-bound translation factors. This chain is Large ribosomal subunit protein uL11, found in Frankia alni (strain DSM 45986 / CECT 9034 / ACN14a).